Reading from the N-terminus, the 123-residue chain is Protein Rev (123 aa).

Residues Ser5 and Ser8 each carry the phosphoserine; by host CK2 modification. A homomultimerization region spans residues 18–26 (IIKILYQSN). Disordered stretches follow at residues 24 to 49 (QSNP…RARQ) and 82 to 123 (TLDS…GAKN). The Nuclear localization signal and RNA-binding (RRE) motif lies at 34–50 (SRQARRNRRRRWRARQR). Residues 36–49 (QARRNRRRRWRARQ) are compositionally biased toward basic residues. The short motif at 73–84 (LPLPPIERLTLD) is the Nuclear export signal and binding to XPO1 element. Polar residues predominate over residues 97 to 112 (PQGTETGTGSPNTPEG).

The protein belongs to the HIV-1 REV protein family. Homomultimer; when bound to the RRE. Multimeric assembly is essential for activity and may involve XPO1. Binds to human KPNB1, XPO1, TNPO1, RANBP5 and IPO7. Interacts with the viral Integrase. Interacts with human KHDRBS1. Interacts with human NAP1; this interaction decreases Rev multimerization and stimulates its activity. Interacts with human DEAD-box helicases DDX3 and DDX24; these interactions may serve for viral RNA export to the cytoplasm and packaging, respectively. Interacts with human PSIP1; this interaction may inhibit HIV-1 DNA integration by promoting dissociation of the Integrase-LEDGF/p75 complex. Asymmetrically arginine dimethylated at one site by host PRMT6. Methylation impairs the RNA-binding activity and export of viral RNA from the nucleus to the cytoplasm. Post-translationally, phosphorylated by protein kinase CK2. Presence of, and maybe binding to the N-terminus of the regulatory beta subunit of CK2 is necessary for CK2-mediated Rev's phosphorylation.

The protein resides in the host nucleus. It is found in the host nucleolus. It localises to the host cytoplasm. Escorts unspliced or incompletely spliced viral pre-mRNAs (late transcripts) out of the nucleus of infected cells. These pre-mRNAs carry a recognition sequence called Rev responsive element (RRE) located in the env gene, that is not present in fully spliced viral mRNAs (early transcripts). This function is essential since most viral proteins are translated from unspliced or partially spliced pre-mRNAs which cannot exit the nucleus by the pathway used by fully processed cellular mRNAs. Rev itself is translated from a fully spliced mRNA that readily exits the nucleus. Rev's nuclear localization signal (NLS) binds directly to KPNB1/Importin beta-1 without previous binding to KPNA1/Importin alpha-1. KPNB1 binds to the GDP bound form of RAN (Ran-GDP) and targets Rev to the nucleus. In the nucleus, the conversion from Ran-GDP to Ran-GTP dissociates Rev from KPNB1 and allows Rev's binding to the RRE in viral pre-mRNAs. Rev multimerization on the RRE via cooperative assembly exposes its nuclear export signal (NES) to the surface. Rev can then form a complex with XPO1/CRM1 and Ran-GTP, leading to nuclear export of the complex. Conversion from Ran-GTP to Ran-GDP mediates dissociation of the Rev/RRE/XPO1/RAN complex, so that Rev can return to the nucleus for a subsequent round of export. Beside KPNB1, also seems to interact with TNPO1/Transportin-1, RANBP5/IPO5 and IPO7/RANBP7 for nuclear import. The nucleoporin-like HRB/RIP is an essential cofactor that probably indirectly interacts with Rev to release HIV RNAs from the perinuclear region to the cytoplasm. This chain is Protein Rev, found in Simian immunodeficiency virus (isolate MB66) (SIV-cpz).